A 1099-amino-acid polypeptide reads, in one-letter code: DNA-directed RNA polymerase subunit beta (1099 aa).

This sequence belongs to the RNA polymerase beta chain family. In terms of assembly, in plastids the minimal PEP RNA polymerase catalytic core is composed of four subunits: alpha, beta, beta', and beta''. When a (nuclear-encoded) sigma factor is associated with the core the holoenzyme is formed, which can initiate transcription.

The protein resides in the plastid. The protein localises to the chloroplast. It carries out the reaction RNA(n) + a ribonucleoside 5'-triphosphate = RNA(n+1) + diphosphate. Functionally, DNA-dependent RNA polymerase catalyzes the transcription of DNA into RNA using the four ribonucleoside triphosphates as substrates. The protein is DNA-directed RNA polymerase subunit beta of Bigelowiella natans (Pedinomonas minutissima).